We begin with the raw amino-acid sequence, 745 residues long: F-box only protein 30 (745 aa).

A TRAF-type zinc finger spans residues 48–109 (EHRLLCPFER…SYADRKSYEN (62 aa)). Disordered stretches follow at residues 211–231 (NTSV…LEDQ) and 305–324 (GDSK…SDGT). The span at 222 to 231 (QNARESLEDQ) shows a compositional bias: basic and acidic residues. The span at 305–314 (GDSKQSNLTN) shows a compositional bias: polar residues. The 49-residue stretch at 610 to 658 (NDHLSSLPFEVLQHIAGFLDGFSLCQLSCVSKLMRDVCGSLLQSRGMVI) folds into the F-box domain.

In terms of assembly, part of a SCF (SKP1-cullin-F-box) protein ligase complex. Interacts with SKP1, CUL1 and RBX1/ROC1. Post-translationally, auto-ubiquitinated. In terms of processing, may be neddylated. Neddylation may be required for E3 ligase activity.

It participates in protein modification; protein ubiquitination. Functionally, substrate-recognition component of the SCF (SKP1-CUL1-F-box protein)-type E3 ubiquitin ligase complex. Required for muscle atrophy following denervation. This Homo sapiens (Human) protein is F-box only protein 30 (FBXO30).